We begin with the raw amino-acid sequence, 599 residues long: Aspartate--tRNA(Asp/Asn) ligase (599 aa).

Glutamate 172 is a binding site for L-aspartate. Residues 196 to 199 (QLFK) form an aspartate region. Position 218 (arginine 218) interacts with L-aspartate. Residues 218–220 (RDE) and glutamine 227 each bind ATP. Histidine 451 serves as a coordination point for L-aspartate. Glutamate 485 lines the ATP pocket. Arginine 492 serves as a coordination point for L-aspartate. 537–540 (GLDR) lines the ATP pocket.

Belongs to the class-II aminoacyl-tRNA synthetase family. Type 1 subfamily. As to quaternary structure, homodimer.

The protein localises to the cytoplasm. It carries out the reaction tRNA(Asx) + L-aspartate + ATP = L-aspartyl-tRNA(Asx) + AMP + diphosphate. Its function is as follows. Aspartyl-tRNA synthetase with relaxed tRNA specificity since it is able to aspartylate not only its cognate tRNA(Asp) but also tRNA(Asn). Reaction proceeds in two steps: L-aspartate is first activated by ATP to form Asp-AMP and then transferred to the acceptor end of tRNA(Asp/Asn). The protein is Aspartate--tRNA(Asp/Asn) ligase of Dechloromonas aromatica (strain RCB).